The following is a 352-amino-acid chain: Chorismate synthase (352 aa).

Arginine 48 provides a ligand contact to NADP(+). FMN is bound by residues 125–127 (RSS), 237–238 (NA), glycine 278, 293–297 (KPTSS), and arginine 319.

The protein belongs to the chorismate synthase family. Homotetramer. Requires FMNH2 as cofactor.

It catalyses the reaction 5-O-(1-carboxyvinyl)-3-phosphoshikimate = chorismate + phosphate. It functions in the pathway metabolic intermediate biosynthesis; chorismate biosynthesis; chorismate from D-erythrose 4-phosphate and phosphoenolpyruvate: step 7/7. Catalyzes the anti-1,4-elimination of the C-3 phosphate and the C-6 proR hydrogen from 5-enolpyruvylshikimate-3-phosphate (EPSP) to yield chorismate, which is the branch point compound that serves as the starting substrate for the three terminal pathways of aromatic amino acid biosynthesis. This reaction introduces a second double bond into the aromatic ring system. The protein is Chorismate synthase of Francisella tularensis subsp. tularensis (strain FSC 198).